Here is a 1782-residue protein sequence, read N- to C-terminus: Atrochrysone carboxylic acid synthase (1782 aa).

The segment at 41–270 (HTYTKDRRYP…ALPVYGGLCH (230 aa)) is N-terminal acylcarrier protein transacylase domain (SAT). One can recognise a Ketosynthase family 3 (KS3) domain in the interval 407–841 (QSKIAIVGMS…GGNSTLAIEE (435 aa)). Catalysis depends on for beta-ketoacyl synthase activity residues cysteine 580, histidine 716, and histidine 759. The malonyl-CoA:ACP transacylase (MAT) domain stretch occupies residues 946–1266 (FAFTGQGSSY…LGILHCAGVP (321 aa)). Positions 1331-1648 (TSTVQQIIHE…RILLNRFFSA (318 aa)) are product template (PT) domain. The tract at residues 1335–1468 (QQIIHEQYDG…ATVYYEEASD (134 aa)) is N-terminal hotdog fold. The PKS/mFAS DH domain maps to 1335–1643 (QQIIHEQYDG…FRRYPRILLN (309 aa)). Histidine 1367 acts as the Proton acceptor; for dehydratase activity in catalysis. The tract at residues 1495-1643 (VANRFTRRMA…FRRYPRILLN (149 aa)) is C-terminal hotdog fold. The Proton donor; for dehydratase activity role is filled by aspartate 1554. A disordered region spans residues 1653-1703 (ARKSTPATSAPAPAPPAGSEALQPKAAPASTPAAPASADAPTTNGVKAAAE). Residues 1678-1695 (AAPASTPAAPASADAPTT) are compositionally biased toward low complexity. In terms of domain architecture, Carrier spans 1704–1781 (PDANSTAAKA…DLKSWLLEYY (78 aa)). Serine 1741 carries the post-translational modification O-(pantetheine 4'-phosphoryl)serine.

As to expression, specifically expressed in conidia.

The catalysed reaction is holo-[ACP] + 8 malonyl-CoA + 8 H(+) = atrochrysone carboxyl-[ACP] + 8 CO2 + 8 CoA + 2 H2O. The protein operates within secondary metabolite biosynthesis. Its function is as follows. Non-reducing polyketide synthase; part of the gene cluster that mediates the biosynthesis of trypacidin, a mycotoxin with antiprotozoal activity and that plays a role in the infection process. The pathway begins with the synthesis of atrochrysone thioester by the polyketide synthase (PKS) tpcC. The atrochrysone carboxyl ACP thioesterase tpcB then breaks the thioester bond and releases the atrochrysone carboxylic acid from tpcC. The decarboxylase tpcK converts atrochrysone carboxylic acid to atrochrysone which is further reduced into emodin anthrone. The next step is performed by the emodin anthrone oxygenase tpcL that catalyzes the oxidation of emodin anthrone to emodin. Emodin O-methyltransferase encoded by tpcA catalyzes methylation of the 8-hydroxy group of emodin to form questin. Ring cleavage of questin by questin oxidase tpcI leads to desmethylsulochrin via several intermediates including questin epoxide. Another methylation step catalyzed by tpcM leads to the formation of sulochrin which is further converted to monomethylsulfochrin by tpcH. Finally, the tpcJ catalyzes the conversion of monomethylsulfochrin to trypacidin. Trypacidin is toxic for human pulmonary and bronchial epithelial cells by initiating the intracellular formation of nitric oxide (NO) and hydrogen peroxide (H(2)O(2)), thus triggering host necrotic cell death. The trypacidin pathway is also able to produce endocrocin via a distinct route from the endocrocin Enc pathway. The polypeptide is Atrochrysone carboxylic acid synthase (Aspergillus fumigatus (strain ATCC MYA-4609 / CBS 101355 / FGSC A1100 / Af293) (Neosartorya fumigata)).